The chain runs to 223 residues: Urease accessory protein UreF (223 aa).

The protein belongs to the UreF family. UreD, UreF and UreG form a complex that acts as a GTP-hydrolysis-dependent molecular chaperone, activating the urease apoprotein by helping to assemble the nickel containing metallocenter of UreC. The UreE protein probably delivers the nickel.

It localises to the cytoplasm. Required for maturation of urease via the functional incorporation of the urease nickel metallocenter. This Rhizobium meliloti (strain 1021) (Ensifer meliloti) protein is Urease accessory protein UreF.